Reading from the N-terminus, the 89-residue chain is MSLDTTEKQQLINTHQTHGTDTGSAEVQVAMLSERINRLSGHLQNNIHDFSSRQGLLKMIGRRKRLLNYMRSKSEQRYSETISKLGIRG.

Residues 1–25 (MSLDTTEKQQLINTHQTHGTDTGSA) are disordered. Residues 8–25 (KQQLINTHQTHGTDTGSA) are compositionally biased toward polar residues.

The protein belongs to the universal ribosomal protein uS15 family. As to quaternary structure, part of the 30S ribosomal subunit. Forms a bridge to the 50S subunit in the 70S ribosome, contacting the 23S rRNA.

Functionally, one of the primary rRNA binding proteins, it binds directly to 16S rRNA where it helps nucleate assembly of the platform of the 30S subunit by binding and bridging several RNA helices of the 16S rRNA. Its function is as follows. Forms an intersubunit bridge (bridge B4) with the 23S rRNA of the 50S subunit in the ribosome. The protein is Small ribosomal subunit protein uS15 of Synechococcus sp. (strain CC9902).